Reading from the N-terminus, the 152-residue chain is Large ribosomal subunit protein bL9 (152 aa).

The protein belongs to the bacterial ribosomal protein bL9 family.

In terms of biological role, binds to the 23S rRNA. In Nostoc punctiforme (strain ATCC 29133 / PCC 73102), this protein is Large ribosomal subunit protein bL9.